Reading from the N-terminus, the 1180-residue chain is Protocadherin-12 (1180 aa).

The signal sequence occupies residues 1–17; the sequence is MMLLLPFLLGLLGPGSY. Residues 18–716 lie on the Extracellular side of the membrane; it reads LFISGDCQEV…HEPGVLSTPA (699 aa). 5 Cadherin domains span residues 28-135, 136-244, 245-352, 355-460, and 461-565; these read ATVM…QPQF, PKDE…SPVF, AESS…APSI, TWAS…APVF, and EKSR…APEV. 2 N-linked (GlcNAc...) asparagine glycosylation sites follow: N265 and N415. 3 N-linked (GlcNAc...) asparagine glycosylation sites follow: N582, N659, and N662. The Cadherin 6 domain occupies 600 to 711; the sequence is PAGTGIPPKA…LRDSAHEPGV (112 aa). A helical membrane pass occupies residues 717–737; it reads LALICLAVLLAIFGLLLALFV. Over 738–1180 the chain is Cytoplasmic; the sequence is SICRTERKDN…ESRLGCGRNL (443 aa). Disordered stretches follow at residues 857 to 930 and 973 to 1026; these read NASR…GPHQ and QFQP…PEED. S859 carries the phosphoserine modification. Residues 904–918 are compositionally biased toward polar residues; sequence PASSATLRRQRNFNG. The segment covering 1014 to 1026 has biased composition (acidic residues); that stretch reads PDLEEGPPSPEED. The residue at position 1064 (S1064) is a Phosphoserine. Positions 1076–1093 are enriched in polar residues; it reads SSPDATTSEEPRTFQTFG. 2 disordered regions span residues 1076–1104 and 1156–1180; these read SSPDATTSEEPRTFQTFGKTVGPGPELSP and SGASASEAQGRKKAAESRLGCGRNL.

Post-translationally, N-glycosylated. In terms of processing, cleaved by ADAM10 close to the transmembrane domain to release the Protocadherin-12, secreted form in the serum. Cleavage results in reduced cellular adhesion in a cell migration assay. In terms of tissue distribution, expressed in endothelial cells: localizes in vasculogenic rather than angiogenic endothelium. Strongly expressed in a subset of invasive cells of the placenta, named glycogen-rich trophoblasts cells (at protein level). glycogen-rich trophoblasts cells originate from the from the ectoplacental cone where they rapidly form tight islets (at protein level). In adult mice, present at high level in mesangial cells of kidney glomeruli, while expression was not detected in other types of perivascular cells.

The protein localises to the cell membrane. It is found in the cell junction. Its subcellular location is the secreted. Functionally, cellular adhesion molecule that may play an important role in cell-cell interactions at interendothelial junctions. Acts as a regulator of cell migration, probably via increasing cell-cell adhesion. Promotes homotypic calcium-dependent aggregation and adhesion and clusters at intercellular junctions. Unable to bind to catenins, weakly associates with the cytoskeleton. This is Protocadherin-12 from Mus musculus (Mouse).